Here is a 256-residue protein sequence, read N- to C-terminus: DNA repair protein RecO (256 aa).

The protein belongs to the RecO family.

In terms of biological role, involved in DNA repair and RecF pathway recombination. The sequence is that of DNA repair protein RecO from Bacillus pumilus (strain SAFR-032).